A 270-amino-acid polypeptide reads, in one-letter code: Ribosomal RNA small subunit methyltransferase J (270 aa).

S-adenosyl-L-methionine-binding positions include glutamate 126–arginine 127 and aspartate 182.

Belongs to the methyltransferase superfamily. RsmJ family.

The protein localises to the cytoplasm. It carries out the reaction guanosine(1516) in 16S rRNA + S-adenosyl-L-methionine = N(2)-methylguanosine(1516) in 16S rRNA + S-adenosyl-L-homocysteine + H(+). Functionally, specifically methylates the guanosine in position 1516 of 16S rRNA. The chain is Ribosomal RNA small subunit methyltransferase J from Acinetobacter baylyi (strain ATCC 33305 / BD413 / ADP1).